Consider the following 213-residue polypeptide: Thiamine-phosphate synthase (213 aa).

4-amino-2-methyl-5-(diphosphooxymethyl)pyrimidine-binding positions include 42–46 (QYREK) and Asp-77. Residues Asp-78 and Asp-97 each coordinate Mg(2+). Ser-116 contributes to the 4-amino-2-methyl-5-(diphosphooxymethyl)pyrimidine binding site. 142 to 144 (TIS) contributes to the 2-[(2R,5Z)-2-carboxy-4-methylthiazol-5(2H)-ylidene]ethyl phosphate binding site. Lys-145 contributes to the 4-amino-2-methyl-5-(diphosphooxymethyl)pyrimidine binding site. 2-[(2R,5Z)-2-carboxy-4-methylthiazol-5(2H)-ylidene]ethyl phosphate is bound by residues Gly-173 and 193 to 194 (IS).

Belongs to the thiamine-phosphate synthase family. Requires Mg(2+) as cofactor.

It carries out the reaction 2-[(2R,5Z)-2-carboxy-4-methylthiazol-5(2H)-ylidene]ethyl phosphate + 4-amino-2-methyl-5-(diphosphooxymethyl)pyrimidine + 2 H(+) = thiamine phosphate + CO2 + diphosphate. The enzyme catalyses 2-(2-carboxy-4-methylthiazol-5-yl)ethyl phosphate + 4-amino-2-methyl-5-(diphosphooxymethyl)pyrimidine + 2 H(+) = thiamine phosphate + CO2 + diphosphate. The catalysed reaction is 4-methyl-5-(2-phosphooxyethyl)-thiazole + 4-amino-2-methyl-5-(diphosphooxymethyl)pyrimidine + H(+) = thiamine phosphate + diphosphate. It participates in cofactor biosynthesis; thiamine diphosphate biosynthesis; thiamine phosphate from 4-amino-2-methyl-5-diphosphomethylpyrimidine and 4-methyl-5-(2-phosphoethyl)-thiazole: step 1/1. Its function is as follows. Condenses 4-methyl-5-(beta-hydroxyethyl)thiazole monophosphate (THZ-P) and 2-methyl-4-amino-5-hydroxymethyl pyrimidine pyrophosphate (HMP-PP) to form thiamine monophosphate (TMP). The protein is Thiamine-phosphate synthase of Limosilactobacillus fermentum (strain NBRC 3956 / LMG 18251) (Lactobacillus fermentum).